We begin with the raw amino-acid sequence, 238 residues long: ATP synthase subunit a (238 aa).

Transmembrane regions (helical) follow at residues 18–38 (LTIL…VFWA), 75–95 (YSLL…LGLM), 112–132 (NFGV…IEGI), 179–199 (VVTG…PLAF), and 203–223 (IVWT…FIIL).

This sequence belongs to the ATPase A chain family. As to quaternary structure, F-type ATPases have 2 components, CF(1) - the catalytic core - and CF(0) - the membrane proton channel. CF(1) has five subunits: alpha(3), beta(3), gamma(1), delta(1), epsilon(1). CF(0) has three main subunits: a(1), b(2) and c(9-12). The alpha and beta chains form an alternating ring which encloses part of the gamma chain. CF(1) is attached to CF(0) by a central stalk formed by the gamma and epsilon chains, while a peripheral stalk is formed by the delta and b chains.

The protein resides in the cell membrane. In terms of biological role, key component of the proton channel; it plays a direct role in the translocation of protons across the membrane. In Streptococcus agalactiae serotype Ia (strain ATCC 27591 / A909 / CDC SS700), this protein is ATP synthase subunit a.